Reading from the N-terminus, the 715-residue chain is Fatty acid oxidation complex subunit alpha (715 aa).

Positions 8-197 (NSQPSAFSLT…NLGLVEEAVP (190 aa)) are enoyl-CoA hydratase. The interval 313-715 (ATIKKVGVLG…MANEEQSFYS (403 aa)) is 3-hydroxyacyl-CoA dehydrogenase.

In the N-terminal section; belongs to the enoyl-CoA hydratase/isomerase family. The protein in the central section; belongs to the 3-hydroxyacyl-CoA dehydrogenase family. In terms of assembly, heterotetramer of two alpha chains (FadJ) and two beta chains (FadI).

Its subcellular location is the cytoplasm. The enzyme catalyses a (3S)-3-hydroxyacyl-CoA = a (2E)-enoyl-CoA + H2O. It catalyses the reaction a 4-saturated-(3S)-3-hydroxyacyl-CoA = a (3E)-enoyl-CoA + H2O. The catalysed reaction is a (3S)-3-hydroxyacyl-CoA + NAD(+) = a 3-oxoacyl-CoA + NADH + H(+). It carries out the reaction (3S)-3-hydroxybutanoyl-CoA = (3R)-3-hydroxybutanoyl-CoA. The protein operates within lipid metabolism; fatty acid beta-oxidation. Catalyzes the formation of a hydroxyacyl-CoA by addition of water on enoyl-CoA. Also exhibits 3-hydroxyacyl-CoA epimerase and 3-hydroxyacyl-CoA dehydrogenase activities. The protein is Fatty acid oxidation complex subunit alpha of Photobacterium profundum (strain SS9).